The chain runs to 310 residues: 26S proteasome non-ATPase regulatory subunit 14 (310 aa).

The MPN domain occupies V31 to N166. Residues H113, H115, and D126 each coordinate Zn(2+). Residues H113–D126 carry the JAMM motif motif. Phosphoserine is present on residues S150 and S224. T266 carries the phosphothreonine modification.

It belongs to the peptidase M67A family. PSMD14 subfamily. Component of the 19S proteasome regulatory particle complex. The 26S proteasome consists of a 20S core particle (CP) and two 19S regulatory subunits (RP). The regulatory particle is made of a lid composed of 9 subunits including PSMD4, a base containing 6 ATPases and few additional components. Within the complex, PSMD4 interacts with subunit PSMD7 through their respective MPN domain. Interacts with TXNL1. As to expression, widely expressed. Highest levels in heart and skeletal muscle.

Component of the 26S proteasome, a multiprotein complex involved in the ATP-dependent degradation of ubiquitinated proteins. This complex plays a key role in the maintenance of protein homeostasis by removing misfolded or damaged proteins, which could impair cellular functions, and by removing proteins whose functions are no longer required. Therefore, the proteasome participates in numerous cellular processes, including cell cycle progression, apoptosis, or DNA damage repair. The PSMD14 subunit is a metalloprotease that specifically cleaves 'Lys-63'-linked polyubiquitin chains within the complex. Plays a role in response to double-strand breaks (DSBs): acts as a regulator of non-homologous end joining (NHEJ) by cleaving 'Lys-63'-linked polyubiquitin, thereby promoting retention of JMJD2A/KDM4A on chromatin and restricting TP53BP1 accumulation. Also involved in homologous recombination repair by promoting RAD51 loading. The protein is 26S proteasome non-ATPase regulatory subunit 14 (PSMD14) of Homo sapiens (Human).